A 482-amino-acid chain; its full sequence is tRNA sulfurtransferase (482 aa).

Residues leucine 61–arginine 165 form the THUMP domain. Residues leucine 183 to isoleucine 184, lysine 265, glycine 287, and glutamine 296 each bind ATP. An intrachain disulfide couples cysteine 344 to cysteine 456. The 79-residue stretch at phenylalanine 404–proline 482 folds into the Rhodanese domain. The active-site Cysteine persulfide intermediate is the cysteine 456.

It belongs to the ThiI family.

The protein localises to the cytoplasm. It catalyses the reaction [ThiI sulfur-carrier protein]-S-sulfanyl-L-cysteine + a uridine in tRNA + 2 reduced [2Fe-2S]-[ferredoxin] + ATP + H(+) = [ThiI sulfur-carrier protein]-L-cysteine + a 4-thiouridine in tRNA + 2 oxidized [2Fe-2S]-[ferredoxin] + AMP + diphosphate. The enzyme catalyses [ThiS sulfur-carrier protein]-C-terminal Gly-Gly-AMP + S-sulfanyl-L-cysteinyl-[cysteine desulfurase] + AH2 = [ThiS sulfur-carrier protein]-C-terminal-Gly-aminoethanethioate + L-cysteinyl-[cysteine desulfurase] + A + AMP + 2 H(+). Its pathway is cofactor biosynthesis; thiamine diphosphate biosynthesis. Functionally, catalyzes the ATP-dependent transfer of a sulfur to tRNA to produce 4-thiouridine in position 8 of tRNAs, which functions as a near-UV photosensor. Also catalyzes the transfer of sulfur to the sulfur carrier protein ThiS, forming ThiS-thiocarboxylate. This is a step in the synthesis of thiazole, in the thiamine biosynthesis pathway. The sulfur is donated as persulfide by IscS. In Escherichia coli O139:H28 (strain E24377A / ETEC), this protein is tRNA sulfurtransferase.